Here is a 370-residue protein sequence, read N- to C-terminus: Aspartate-semialdehyde dehydrogenase (370 aa).

NADP(+) is bound by residues 10–13, 37–38, and glutamine 73; these read RGMV and TS. Arginine 102 serves as a coordination point for phosphate. Residue cysteine 135 is the Acyl-thioester intermediate of the active site. Residue glutamine 162 participates in substrate binding. NADP(+) contacts are provided by residues 165 to 166 and proline 193; that span reads SG. Glutamate 241 contributes to the substrate binding site. Lysine 244 is a phosphate binding site. A substrate-binding site is contributed by arginine 268. Histidine 275 acts as the Proton acceptor in catalysis. Glutamine 351 contributes to the NADP(+) binding site.

This sequence belongs to the aspartate-semialdehyde dehydrogenase family. As to quaternary structure, homodimer.

The catalysed reaction is L-aspartate 4-semialdehyde + phosphate + NADP(+) = 4-phospho-L-aspartate + NADPH + H(+). It functions in the pathway amino-acid biosynthesis; L-lysine biosynthesis via DAP pathway; (S)-tetrahydrodipicolinate from L-aspartate: step 2/4. Its pathway is amino-acid biosynthesis; L-methionine biosynthesis via de novo pathway; L-homoserine from L-aspartate: step 2/3. It participates in amino-acid biosynthesis; L-threonine biosynthesis; L-threonine from L-aspartate: step 2/5. Functionally, catalyzes the NADPH-dependent formation of L-aspartate-semialdehyde (L-ASA) by the reductive dephosphorylation of L-aspartyl-4-phosphate. This chain is Aspartate-semialdehyde dehydrogenase (asd), found in Pseudomonas aeruginosa (strain ATCC 15692 / DSM 22644 / CIP 104116 / JCM 14847 / LMG 12228 / 1C / PRS 101 / PAO1).